The primary structure comprises 718 residues: Ophiobolin F synthase oblA (718 aa).

Residues 1–320 (MACKYSTLID…RYNGPTKFNE (320 aa)) form a (7Z)-ophiobola-7,19-dien-3-ol synthase region. D93 and D97 together coordinate Mg(2+). D93 lines the substrate pocket. The DDXXD 1 signature appears at 93–97 (DDVID). Residues 180 to 183 (RALD), N224, 228 to 232 (SFEKE), and 311 to 312 (RY) each bind substrate. The NSE/DTE motif lies at 224–232 (NDLFSFEKE). The geranylfarnesyl diphosphate synthase stretch occupies residues 321–718 (LQLLRSEHGL…LRVMLELLKV (398 aa)). Residues 346–391 (LVEGDCHESKPNELKRKRNGVSVDDEMRTNGTNGAKKPAHVSQPST) form a disordered region. The segment covering 349–359 (GDCHESKPNEL) has biased composition (basic and acidic residues). Residues K429, R432, and H461 each coordinate isopentenyl diphosphate. Residues D468 and D472 each contribute to the Mg(2+) site. Positions 468 to 472 (DDLED) match the DDXXD 2 motif. Residue R477 coordinates dimethylallyl diphosphate. R478 contacts isopentenyl diphosphate. Dimethylallyl diphosphate-binding residues include K555, T556, Q594, N601, K611, and K621.

This sequence in the N-terminal section; belongs to the terpene synthase family. The protein in the C-terminal section; belongs to the FPP/GGPP synthase family. Mg(2+) is required as a cofactor.

The enzyme catalyses isopentenyl diphosphate + (2E,6E)-farnesyl diphosphate = (2E,6E,10E)-geranylgeranyl diphosphate + diphosphate. The catalysed reaction is isopentenyl diphosphate + (2E,6E,10E)-geranylgeranyl diphosphate = (2E,6E,10E,14E)-geranylfarnesyl diphosphate + diphosphate. It carries out the reaction (2E,6E,10E,14E)-geranylfarnesyl diphosphate + H2O = ophiobolin F + diphosphate. The protein operates within secondary metabolite biosynthesis; terpenoid biosynthesis. Functionally, bifunctional sesterterpene synthase; part of the gene cluster that mediates the biosynthesis of the sesterterpenes ophiobolins, fungal phytotoxins with potential anti-cancer activities. The first step of the pathway is performed by the sesterterpene synthase oblA that possesses both prenyl transferase and terpene cyclase activity, converting isopentenyl diphosphate and dimethylallyl diphosphate into geranylfarnesyl diphosphate (GFPP) and further converting GFPP into ophiobolin F, respectively. Other sesterterpenoids (C(25) terpenoids) are found as minor products of oblA. It is expected that ophiobolin F is then oxidized to ophiobolin A via ophiobolin C and ophiobolin B intermediates by the combined action of the cytochrome P450 monooxygenase oblB and the FAD-dependent oxidoreductase oblC. Although oblB catalyzes multistep oxygenations at C5 and C21/C7 in a relatively efficient manner, it is unable to convert ophiobolin F to ophiobolin C and produces instead several unexpected derivatives. The chain is Ophiobolin F synthase oblA from Aspergillus clavatus (strain ATCC 1007 / CBS 513.65 / DSM 816 / NCTC 3887 / NRRL 1 / QM 1276 / 107).